Consider the following 249-residue polypeptide: 2-dehydro-3-deoxy-L-rhamnonate dehydrogenase (NAD(+)) (249 aa).

Tyrosine 156 (proton acceptor) is an active-site residue.

The protein belongs to the short-chain dehydrogenases/reductases (SDR) family. As to quaternary structure, homotetramer.

It carries out the reaction 2-dehydro-3-deoxy-L-rhamnonate + NAD(+) = 2,4-didehydro-3-deoxy-L-rhamnonate + NADH + H(+). Its pathway is carbohydrate degradation; L-rhamnose degradation. Functionally, catalyzes the NAD(+)-dependent dehydrogenation of 2-dehydro-3-deoxy-L-rhamnonate to form 2,4-didehydro-3-deoxy-L-rhamnonate. Does not show any detectable activity in the presence of NADP(+). Catalyzes the fourth step in an alternative pathway for rhamnose utilization that does not involve phosphorylated intermediates. The chain is 2-dehydro-3-deoxy-L-rhamnonate dehydrogenase (NAD(+)) from Sphingomonas sp. (strain SKA58).